Here is a 274-residue protein sequence, read N- to C-terminus: NADPH-dependent 7-cyano-7-deazaguanine reductase (274 aa).

80 to 82 (VES) contacts substrate. 82–83 (SK) lines the NADPH pocket. C181 acts as the Thioimide intermediate in catalysis. Catalysis depends on D188, which acts as the Proton donor. Substrate is bound at residue 220–221 (HE). 249–250 (RG) lines the NADPH pocket.

It belongs to the GTP cyclohydrolase I family. QueF type 2 subfamily. In terms of assembly, homodimer.

It localises to the cytoplasm. The enzyme catalyses 7-aminomethyl-7-carbaguanine + 2 NADP(+) = 7-cyano-7-deazaguanine + 2 NADPH + 3 H(+). The protein operates within tRNA modification; tRNA-queuosine biosynthesis. In terms of biological role, catalyzes the NADPH-dependent reduction of 7-cyano-7-deazaguanine (preQ0) to 7-aminomethyl-7-deazaguanine (preQ1). This is NADPH-dependent 7-cyano-7-deazaguanine reductase from Paraburkholderia phymatum (strain DSM 17167 / CIP 108236 / LMG 21445 / STM815) (Burkholderia phymatum).